The following is a 349-amino-acid chain: Alcohol dehydrogenase 1 (349 aa).

The Zn(2+) site is built by Cys-46, His-69, Cys-100, Cys-103, Cys-106, Cys-114, and Cys-156. NAD(+) contacts are provided by residues Gly-180–Gly-186, Asp-204, Lys-208, Val-270–Leu-272, and Arg-342.

The protein belongs to the zinc-containing alcohol dehydrogenase family. As to quaternary structure, homotetramer. Requires Zn(2+) as cofactor.

The enzyme catalyses a primary alcohol + NAD(+) = an aldehyde + NADH + H(+). The catalysed reaction is a secondary alcohol + NAD(+) = a ketone + NADH + H(+). The sequence is that of Alcohol dehydrogenase 1 from Caenorhabditis elegans.